The chain runs to 249 residues: MMGRPEGLKLIDENGKRIDGRKKYELRPIKMEVGVLKNADGSAYVEWGKNKVLAAVYGPREIHPKHLQRPDRAILRVRYNMAPFSVEERKKPGPDRRSVEISKVIRGALEPALLLHMFPRTAIDVFIEILQADAGTRVAGITAASLALADAGIPMKDLVAACAAGKIDGEIVLDLNKEEDNYGEADVPVAIMPLKNDITLLQMDGYLTKDEFLEAVRLAIKGAKAVYQKQREALKEKYLKIAQEVEGNE.

The protein belongs to the RNase PH family. Rrp41 subfamily. In terms of assembly, component of the archaeal exosome complex. Forms a hexameric ring-like arrangement composed of 3 Rrp41-Rrp42 heterodimers. The hexameric ring associates with a trimer of Rrp4 and/or Csl4 subunits.

Its subcellular location is the cytoplasm. Catalytic component of the exosome, which is a complex involved in RNA degradation. Has 3'-&gt;5' exoribonuclease activity. Can also synthesize heteromeric RNA-tails. This is Exosome complex component Rrp41 from Thermococcus kodakarensis (strain ATCC BAA-918 / JCM 12380 / KOD1) (Pyrococcus kodakaraensis (strain KOD1)).